The primary structure comprises 482 residues: Rho GTPase-activating protein 15 (482 aa).

5 positions are modified to phosphoserine: Ser-51, Ser-111, Ser-205, Ser-208, and Ser-250. A PH domain is found at 87–198 (MVEKEGYLQK…WFHAIKNAID (112 aa)). Positions 288-477 (SHLHTVCERE…FMLTEYDKIF (190 aa)) constitute a Rho-GAP domain.

It localises to the cytoplasm. The protein resides in the membrane. In terms of biological role, GTPase activator for the Rho-type GTPases by converting them to an inactive GDP-bound state. Has activity toward RAC1. Overexpression results in an increase in actin stress fibers and cell contraction. The polypeptide is Rho GTPase-activating protein 15 (Arhgap15) (Rattus norvegicus (Rat)).